The chain runs to 158 residues: C-type lectin mannose-binding isoform (158 aa).

Residues 1–20 (MGRFLLVTLSMLVVTFSLNE) form the signal peptide. Cystine bridges form between Cys-26–Cys-37, Cys-54–Cys-154, and Cys-129–Cys-146. The C-type lectin domain maps to 33–155 (KNGFCYKVFN…CEALYHFICQ (123 aa)). Residues 119 to 121 (EPN) carry the Mannose-binding motif. A glycan (N-linked (GlcNAc...) asparagine) is linked at Asn-121. Ca(2+)-binding residues include Glu-127, Asn-142, and Asp-143.

Belongs to the true venom lectin family. As to quaternary structure, homodimer; disulfide-linked. In terms of tissue distribution, expressed by the venom gland.

Its subcellular location is the secreted. Functionally, mannose-binding lectin that binds to and agglutinates erythrocytes in a calcium-dependent manner. The chain is C-type lectin mannose-binding isoform from Notechis scutatus scutatus (Mainland tiger snake).